Reading from the N-terminus, the 834-residue chain is Structure-specific endonuclease subunit SLX4 (834 aa).

Disordered regions lie at residues 80 to 105, 272 to 307, 332 to 372, 401 to 421, 603 to 649, and 720 to 740; these read RVPRNNPVTGPSKEHKQRTRSPKTTT, TVPAIPTPTESSTTEDVQGSSSKQQRVKAKKPQKGK, QNVA…GRPV, GYPEYPCDETQDTQNSPSNSA, ESKP…AKAL, and ATPNARRSRQGSSSASFSIEP. Positions 279–295 are enriched in polar residues; that stretch reads PTESSTTEDVQGSSSKQ. Residues 296–305 are compositionally biased toward basic residues; the sequence is QRVKAKKPQK. 2 stretches are compositionally biased toward polar residues: residues 345-366 and 412-421; these read SNRPSGTKHSNSGRGKSSTLKN and DTQNSPSNSA. Basic and acidic residues predominate over residues 611–630; it reads DDARKNGFRKENHSDVRVRP. The segment covering 729–740 has biased composition (low complexity); the sequence is QGSSSASFSIEP.

This sequence belongs to the SLX4 family. In terms of assembly, forms a heterodimer with SLX1. Post-translationally, phosphorylated in response to DNA damage.

It is found in the nucleus. Its function is as follows. Regulatory subunit of the SLX1-SLX4 structure-specific endonuclease that resolves DNA secondary structures generated during DNA repair and recombination. Has endonuclease activity towards branched DNA substrates, introducing single-strand cuts in duplex DNA close to junctions with ss-DNA. This chain is Structure-specific endonuclease subunit SLX4, found in Ajellomyces capsulatus (strain NAm1 / WU24) (Darling's disease fungus).